We begin with the raw amino-acid sequence, 288 residues long: Probable chromosome 1-partitioning protein ParB (288 aa).

It belongs to the ParB family.

Involved in chromosome partition. Localize to both poles of the predivisional cell following completion of DNA replication. Binds to the DNA origin of replication. The chain is Probable chromosome 1-partitioning protein ParB (parB1) from Deinococcus radiodurans (strain ATCC 13939 / DSM 20539 / JCM 16871 / CCUG 27074 / LMG 4051 / NBRC 15346 / NCIMB 9279 / VKM B-1422 / R1).